Here is a 393-residue protein sequence, read N- to C-terminus: MKNKYYPLRSSMDELSAKNDNEIDLEKGPLPEYNSEDGSTLPPYSENINLKDPKQMGANNPNLFNTDESTTPPDYGEDSLSITHRENHSSGTADNSSTSPLKKAFLSFISIFVLNVPAVCYLTYKDALFKDYGKDEWVYFAVWCASCLMIFISLWYFYETWIKAVKVTVIFLAQCIKVTVVFLAQCVKVTSISLAKCVKLTAVFLAQCVKVTAVFLAQCVKVISIGLFNIRREMMIIIWLLWLIICCILFGCVKSGDLNLNKALIYSTCTISAVLLLIVSSVCIPFWTFERTLAKLAKVFLLQSGIVLVLNGTMFLRGKHFEWTGCEIEASVLFIMGNVLFLCEMECPGALIRTRNSIRNGIAFILEGAGRAIRGANDNNDIPLGEMEVESEV.

A disordered region spans residues 1 to 98 (MKNKYYPLRS…SSGTADNSST (98 aa)). The span at 11 to 29 (SMDELSAKNDNEIDLEKGP) shows a compositional bias: basic and acidic residues. Composition is skewed to polar residues over residues 57 to 72 (GANN…STTP) and 89 to 98 (SSGTADNSST). Transmembrane regions (helical) follow at residues 104 to 124 (AFLS…YLTY), 137 to 157 (WVYF…LWYF), 167 to 187 (VTVI…AQCV), 208 to 228 (CVKV…IGLF), 233 to 253 (EMMI…FGCV), 269 to 289 (CTIS…FWTF), 296 to 316 (LAKV…TMFL), and 332 to 352 (VLFI…GALI).

It belongs to the WTF family. In terms of assembly, homomer. Forms protein aggregates. The two isoforms can interact with each other and with themselves. High sequence similarity is required for their interaction.

The protein resides in the spore membrane. Its subcellular location is the vacuole membrane. The protein localises to the ascus epiplasm. It is found in the cytoplasm. It localises to the endoplasmic reticulum membrane. Its function is as follows. Promotes unequal transmission of alleles from the parental zygote to progeny spores by acting as poison/antidote system where the poison and antidote proteins are produced from the same locus; the poison component is trans-acting and targets all spores within an ascus whereas the antidote component is spore-specific, leading to poisoning of all progeny that do not inherit the allele. Functionally, localizes isoform 2 to the vacuole thereby facilitating its degradation. In terms of biological role, forms toxic aggregates that disrupt spore maturation. This chain is Meiotic driver wtf19, found in Schizosaccharomyces pombe (strain 972 / ATCC 24843) (Fission yeast).